The sequence spans 106 residues: Synaptic plasticity regulator PANTS (106 aa).

Residues 67 to 106 (LQQSEKTRLEGKQNNSPVWTLRKNPPPDWYLPLDPGKPRQ) are disordered.

Belongs to the UPF0545 family. In terms of processing, rapidly degraded by proteolysis following neuronal stimulation, resulting in increased AMPA receptor clustering.

The protein resides in the synapse. The protein localises to the synaptic cleft. Negatively regulates long-term potentiation and modulates adult synaptic plasticity. In Xenopus laevis (African clawed frog), this protein is Synaptic plasticity regulator PANTS.